The sequence spans 101 residues: MGAISQERLLKVILAPVISEKSTRVADKLNQVVFRVLPDATKQEIGAAVASLFKVEVAGVQVLNVKGKVKRSGRVMGRRDSWKKAYVTLKPGQDIDFASGQ.

The protein belongs to the universal ribosomal protein uL23 family. As to quaternary structure, part of the 50S ribosomal subunit. Contacts protein L29, and trigger factor when it is bound to the ribosome.

In terms of biological role, one of the early assembly proteins it binds 23S rRNA. One of the proteins that surrounds the polypeptide exit tunnel on the outside of the ribosome. Forms the main docking site for trigger factor binding to the ribosome. The chain is Large ribosomal subunit protein uL23 from Thiobacillus denitrificans (strain ATCC 25259 / T1).